Consider the following 167-residue polypeptide: Shikimate kinase (167 aa).

12-17 (GSGKTT) is a binding site for ATP. Position 16 (T16) interacts with Mg(2+). Substrate contacts are provided by D34, R58, and G80. R117 is an ATP binding site. R135 is a binding site for substrate. R152 lines the ATP pocket.

The protein belongs to the shikimate kinase family. In terms of assembly, monomer. Mg(2+) serves as cofactor.

The protein resides in the cytoplasm. The enzyme catalyses shikimate + ATP = 3-phosphoshikimate + ADP + H(+). It participates in metabolic intermediate biosynthesis; chorismate biosynthesis; chorismate from D-erythrose 4-phosphate and phosphoenolpyruvate: step 5/7. In terms of biological role, catalyzes the specific phosphorylation of the 3-hydroxyl group of shikimic acid using ATP as a cosubstrate. The chain is Shikimate kinase from Salinispora arenicola (strain CNS-205).